Reading from the N-terminus, the 442-residue chain is MSRRVVITGLGCVTPLGRSLSESWGNLLSSKNGLTPITSLPNYNEDYKLREKSIPSTITVGKIPENFQNENSAINKLLFTSQDERRTSSFIKLALRTTYEALHNAGLLNPNDITINTSLCNLDHFGCLIGSGIGSIQDIYQTSLQFHNDNKRINPYFVPKILTNMAAGNVSIKFNLRGLSHSVSTACATGNNSIGDAFNFIRLGMQDICVAGASETSLHPLSLAGFIRAKSITTNGISRPFDTQRSGFVLGEGCGMIVMESLEHAQKRNANIISELVGYGLSSDACHITSPPADGNGAKRAIEMALKMARLEPTDVDYVNAHATSTLLGDKAECLAVASALLPGRSKSKPLYISSNKGAIGHLLGAAGAVESIFTICSLKDDKMPHTLNLDNVLTLENNEADKLHFIRDKPIVGANPKYALCNSFGFGGVNTSLLFKKWEGS.

The Ketosynthase family 3 (KS3) domain occupies 2–438; it reads SRRVVITGLG…GVNTSLLFKK (437 aa). Catalysis depends on for beta-ketoacyl synthase activity residues Cys-187, His-322, and His-362.

Belongs to the thiolase-like superfamily. Beta-ketoacyl-ACP synthases family.

It localises to the mitochondrion. The enzyme catalyses a fatty acyl-[ACP] + malonyl-[ACP] + H(+) = a 3-oxoacyl-[ACP] + holo-[ACP] + CO2. Functionally, possibly involved in the synthesis of a specialized molecule, probably related to a fatty acid, which is essential for mitochondrial respiration. Is essential for oxygen uptake and the presence of cytochromes A and B. The protein is 3-oxoacyl-[acyl-carrier-protein] synthase homolog (CEM1) of Saccharomyces cerevisiae (strain ATCC 204508 / S288c) (Baker's yeast).